Reading from the N-terminus, the 151-residue chain is Aspartate carbamoyltransferase regulatory chain (151 aa).

Zn(2+) contacts are provided by cysteine 107, cysteine 112, cysteine 135, and cysteine 138.

It belongs to the PyrI family. As to quaternary structure, contains catalytic and regulatory chains. The cofactor is Zn(2+).

Involved in allosteric regulation of aspartate carbamoyltransferase. This Psychromonas ingrahamii (strain DSM 17664 / CCUG 51855 / 37) protein is Aspartate carbamoyltransferase regulatory chain.